Consider the following 845-residue polypeptide: Synaptonemal complex protein 1 (845 aa).

Positions 59–215 (ETRQVYVDLN…YQLTEEKEAQ (157 aa)) are interaction with SYCE3. Coiled-coil stretches lie at residues 64-211 (YVDL…LTEE) and 244-544 (LRTE…EIEV). Residues 550-644 (EKLLGEVEKA…VSLKKQLEIE (95 aa)) are required for pH-induced assembly of C-terminal ends into antiparallel tetramers. Positions 553–556 (LGEV) match the Nuclear localization signal motif. A coiled-coil region spans residues 620 to 663 (KTALETELSNIRNELVSLKKQLEIEREEKEKLKLEKENTAILKD). Residues 657-845 (NTAILKDKKD…RLKEAEKLFA (189 aa)) are DNA-binding. Ser676 is modified (phosphoserine). The segment covering 684–703 (FDSKTTPSQNISRISSSMES) has biased composition (polar residues). The disordered stretch occupies residues 684 to 709 (FDSKTTPSQNISRISSSMESGKTKDN). A Nuclear localization signal motif is present at residues 753 to 756 (KKRK). The segment at 786–808 (LYNNNSPNSHLTPKQTPLSLSTP) is disordered.

As to quaternary structure, structural component of synaptonemal complexes. Homotetramer that consists of an N-terminal four-helical bundle that bifurcates into two elongated C-terminal dimeric coiled coils. This tetrameric building block potentially self-assembles into a supramolecular zipper-like lattice to mediate meiotic chromosome synapsis. Self-assembly is likely initiated by local proton density at chromosome axis, which is predicted to trigger antiparallel back to back assembly of adjacent C-terminal ends into tetrameric structures that anchor to chromosomal DNA. Then the N-terminal ends are predicted to undergo cooperative antiparallel head to head assembly at the midline of synaptonemal complexes central element to form a zipper-like lattice between properly aligned homologous chromosomes. The nascent synapsis generated by SYCP1 is stabilized through interaction with central element proteins SYCE1 and SYCE2. Interacts (via tetrameric core) with SYCE3; the interaction remodels SYCP1 homotetramers to 2:1 heterotrimers with SYCE3. SYCP1/SYCE3 heterotrimers form lattice assemblies as part of the mature synaptonemal complex via both lateral and head-to-head interactions. Forms a complex with EWSR1, PRDM9, SYCP3 and REC8; complex formation is dependent of phosphorylated form of REC8 and requires PRDM9 bound to hotspot DNA; EWSR1 joins PRDM9 with the chromosomal axis through REC8. Interacts with SPO16.

The protein localises to the nucleus. It localises to the chromosome. It is found in the centromere. Its function is as follows. Major component of the transverse filaments of synaptonemal complexes, formed between homologous chromosomes during meiotic prophase. Required for normal assembly of the central element of the synaptonemal complexes. Required for normal centromere pairing during meiosis. Required for normal meiotic chromosome synapsis during oocyte and spermatocyte development and for normal male and female fertility. This chain is Synaptonemal complex protein 1, found in Mesocricetus auratus (Golden hamster).